The chain runs to 188 residues: PRA1 family protein F3 (188 aa).

The next 4 helical transmembrane spans lie at 74–94 (IVVLIVIFFSLIWHPTSLIVF), 95–115 (TVLVVVWIFLYFLRDEPIKLF), 123–143 (TVLIVLSVLTVVLLLLTNATF), and 145–165 (IVGALVTGAVLVLIHSVVRKT).

The protein belongs to the PRA1 family. In terms of assembly, interacts with PRA1F2 and PRA1D. Interacts with ACD11 and BPA1. As to expression, expressed in lateral roots, lateral root caps and columella cells.

It localises to the endoplasmic reticulum membrane. It is found in the membrane. The protein resides in the cytoplasm. Functionally, may be involved in both secretory and endocytic intracellular trafficking in the endosomal/prevacuolar compartments. The protein is PRA1 family protein F3 of Arabidopsis thaliana (Mouse-ear cress).